The following is a 234-amino-acid chain: ATP-dependent dethiobiotin synthetase BioD (234 aa).

Residue aspartate 12 to isoleucine 17 coordinates ATP. Threonine 16 provides a ligand contact to Mg(2+). Lysine 37 is a catalytic residue. Threonine 41 serves as a coordination point for substrate. Residues aspartate 54 and glutamate 115 to glycine 118 contribute to the ATP site. The Mg(2+) site is built by aspartate 54 and glutamate 115.

Belongs to the dethiobiotin synthetase family. Homodimer. Requires Mg(2+) as cofactor.

The protein resides in the cytoplasm. The catalysed reaction is (7R,8S)-7,8-diammoniononanoate + CO2 + ATP = (4R,5S)-dethiobiotin + ADP + phosphate + 3 H(+). It functions in the pathway cofactor biosynthesis; biotin biosynthesis; biotin from 7,8-diaminononanoate: step 1/2. Functionally, catalyzes a mechanistically unusual reaction, the ATP-dependent insertion of CO2 between the N7 and N8 nitrogen atoms of 7,8-diaminopelargonic acid (DAPA, also called 7,8-diammoniononanoate) to form a ureido ring. The sequence is that of ATP-dependent dethiobiotin synthetase BioD from Lysinibacillus sphaericus (strain C3-41).